A 699-amino-acid polypeptide reads, in one-letter code: tRNA(Met) cytidine acetyltransferase TmcA (699 aa).

ATP-binding positions include glutamine 178, 200–209 (GRGKSTLAGM), and arginine 322. Residues 408–547 (MHIASAQVAG…SGCYSAMAIL (140 aa)) enclose the N-acetyltransferase domain. Residues 475-477 (IAV) and 482-488 (RRQGIGR) contribute to the acetyl-CoA site.

This sequence belongs to the RNA cytidine acetyltransferase family. TmcA subfamily.

The protein resides in the cytoplasm. The enzyme catalyses cytidine(34) in elongator tRNA(Met) + acetyl-CoA + ATP + H2O = N(4)-acetylcytidine(34) in elongator tRNA(Met) + ADP + phosphate + CoA + H(+). Functionally, catalyzes the formation of N(4)-acetylcytidine (ac(4)C) at the wobble position of tRNA(Met), by using acetyl-CoA as an acetyl donor and ATP (or GTP). The polypeptide is tRNA(Met) cytidine acetyltransferase TmcA (Pectobacterium atrosepticum (strain SCRI 1043 / ATCC BAA-672) (Erwinia carotovora subsp. atroseptica)).